A 302-amino-acid chain; its full sequence is Heat stress transcription factor B-1 (302 aa).

Residues 1–15 (MAAAEAAAAVGKQQQ) are compositionally biased toward low complexity. 2 disordered regions span residues 1–33 (MAAAEAAAAVGKQQQKGGGGRGGGGGGPAPFLT) and 116–184 (GIRR…RKDN). The segment covering 16 to 28 (KGGGGRGGGGGGP) has biased composition (gly residues). Residues 123 to 133 (TTPQSSKSCGS) show a composition bias toward polar residues. The segment covering 139–150 (FPPPLPPLPPEP) has biased composition (pro residues). Low complexity predominate over residues 151–172 (SATTSSGNDRSSSSASSPPRAD). Residues 170–202 (RADITSENEQLRKDNQTLTMELARARRHCEELL) are a coiled coil. The tract at residues 180–209 (LRKDNQTLTMELARARRHCEELLGFLSRFL) is hydrophobic repeat HR-A/B. The short motif at 211 to 218 (VRQLDLRL) is the Nuclear export signal element. The Nuclear localization signal signature appears at 263 to 267 (RKRAR).

It belongs to the HSF family. Class B subfamily. As to quaternary structure, homotrimer. Post-translationally, exhibits temperature-dependent phosphorylation.

Its subcellular location is the cytoplasm. The protein resides in the nucleus. Functionally, transcriptional regulator that specifically binds DNA of heat shock promoter elements (HSE). In Oryza sativa subsp. japonica (Rice), this protein is Heat stress transcription factor B-1 (HSFB1).